The following is a 113-amino-acid chain: Iron-sulfur cluster insertion protein ErpA (113 aa).

C41, C105, and C107 together coordinate iron-sulfur cluster.

Belongs to the HesB/IscA family. In terms of assembly, homodimer. It depends on iron-sulfur cluster as a cofactor.

In terms of biological role, required for insertion of 4Fe-4S clusters for at least IspG. The polypeptide is Iron-sulfur cluster insertion protein ErpA (Histophilus somni (strain 129Pt) (Haemophilus somnus)).